The sequence spans 316 residues: Ribosomal RNA small subunit methyltransferase H (316 aa).

S-adenosyl-L-methionine-binding positions include 32-34 (AGH), aspartate 52, phenylalanine 79, aspartate 100, and glutamine 107.

The protein belongs to the methyltransferase superfamily. RsmH family.

Its subcellular location is the cytoplasm. It catalyses the reaction cytidine(1402) in 16S rRNA + S-adenosyl-L-methionine = N(4)-methylcytidine(1402) in 16S rRNA + S-adenosyl-L-homocysteine + H(+). Its function is as follows. Specifically methylates the N4 position of cytidine in position 1402 (C1402) of 16S rRNA. The polypeptide is Ribosomal RNA small subunit methyltransferase H (Lysinibacillus sphaericus (strain C3-41)).